We begin with the raw amino-acid sequence, 589 residues long: Monocopper oxidase-like protein SKS1 (589 aa).

Residues 1–24 form the signal peptide; sequence MAATCSLLASFLLCFALLSAVSFA. Asn-62, Asn-111, Asn-204, Asn-243, Asn-260, Asn-296, Asn-345, Asn-365, Asn-433, and Asn-447 each carry an N-linked (GlcNAc...) asparagine glycan. The interval 322–356 is disordered; sequence LPVPKTDVSSPWSAMSQPKTIRQNTSASGARPNPQ. The span at 328 to 349 shows a compositional bias: polar residues; it reads DVSSPWSAMSQPKTIRQNTSAS. His-455 is a Cu cation binding site. Ser-563 carries the GPI-anchor amidated serine lipid modification. The propeptide at 564-589 is removed in mature form; it reads AATSILNGHLKLMLLMVLLASVFRFC.

Belongs to the multicopper oxidase family. Requires Cu cation as cofactor.

It localises to the cell membrane. The sequence is that of Monocopper oxidase-like protein SKS1 (SKS1) from Arabidopsis thaliana (Mouse-ear cress).